Reading from the N-terminus, the 254-residue chain is Transmembrane protein 70, mitochondrial (254 aa).

A mitochondrion-targeting transit peptide spans 1–78; the sequence is MLFLALGGPW…PVCWERGVRC (78 aa). The Mitochondrial matrix portion of the chain corresponds to 79 to 112; sequence SHTQLDKSEDGRLIYTGNLARTVFGVKCFSYSTS. The chain crosses the membrane as a helical span at residues 113 to 133; it reads LISLAFLPYIFAQNNVIFGSL. The Mitochondrial intermembrane portion of the chain corresponds to 134–136; that stretch reads PLQ. Residues 137–157 form a helical membrane-spanning segment; the sequence is ILFYGTIGSFTVITPALLHFL. At 158–254 the chain is on the mitochondrial matrix side; the sequence is TKGYVIRLYH…SEKKQLKEEK (97 aa).

This sequence belongs to the TMEM70 family. Homooligomer. Interacts (homooligomer form) with ATP5MC1; this interaction facilitates the oligomer formation of subunit c/ATP5MC1 (c-ring) and the c-ring membrane insertion and also protects ATP5MC1 against intramitochondrial proteolysis. Interacts with the core subunits TMEM126B, NDUFAF1, ECSIT and ACAD9 of the MCIA complex. Interacts with ATP5MC3, TMEM242 and TIMMDC1.

It is found in the mitochondrion inner membrane. Scaffold protein that participates in the c-ring assembly of mitochondrial ATP synthase (F(1)F(0) ATP synthase or complex V) by facilitating the membrane insertion and oligomer formation of the subunit c/ATP5MC1 through its interaction. Therefore, participates in the early stage of mitochondrial ATP synthase biogenesis and also protects subunit c/ATP5MC1 against intramitochondrial proteolysis. In addition, binds the mitochondrial proton-transporting ATP synthase complexes I and may play a role in the stability of its membrane-bound subassemblies. This is Transmembrane protein 70, mitochondrial from Bos taurus (Bovine).